Consider the following 138-residue polypeptide: Acidic phospholipase A2 pgPLA 1b/pgPLA 2b (138 aa).

The first 16 residues, 1–16 (MRTLWIMAVLLVGVKG), serve as a signal peptide directing secretion. 7 disulfides stabilise this stretch: Cys-42-Cys-131, Cys-44-Cys-60, Cys-59-Cys-111, Cys-65-Cys-138, Cys-66-Cys-104, Cys-73-Cys-97, and Cys-91-Cys-102. The Ca(2+) site is built by Tyr-43, Gly-45, and Gly-47. The active site involves His-63. Asp-64 contributes to the Ca(2+) binding site. Residue Asp-105 is part of the active site.

It belongs to the phospholipase A2 family. Group II subfamily. D49 sub-subfamily. The cofactor is Ca(2+). In terms of tissue distribution, expressed by the venom gland.

It localises to the secreted. The catalysed reaction is a 1,2-diacyl-sn-glycero-3-phosphocholine + H2O = a 1-acyl-sn-glycero-3-phosphocholine + a fatty acid + H(+). Functionally, PLA2 catalyzes the calcium-dependent hydrolysis of the 2-acyl groups in 3-sn-phosphoglycerides. This Protobothrops flavoviridis (Habu) protein is Acidic phospholipase A2 pgPLA 1b/pgPLA 2b.